The sequence spans 277 residues: Undecaprenyl-diphosphatase (277 aa).

Helical transmembrane passes span 3–23 (IVLL…EFLP), 43–63 (VGKV…ILVY), 85–105 (LNVL…GKAI), 109–129 (LFTP…ILWA), 189–209 (TDFS…YSLF), 218–238 (ADLP…WLCI), and 249–269 (SFVG…ATAW).

Belongs to the UppP family.

It is found in the cell inner membrane. It carries out the reaction di-trans,octa-cis-undecaprenyl diphosphate + H2O = di-trans,octa-cis-undecaprenyl phosphate + phosphate + H(+). Its function is as follows. Catalyzes the dephosphorylation of undecaprenyl diphosphate (UPP). Confers resistance to bacitracin. The protein is Undecaprenyl-diphosphatase of Albidiferax ferrireducens (strain ATCC BAA-621 / DSM 15236 / T118) (Rhodoferax ferrireducens).